The following is a 72-amino-acid chain: Lantibiotic Flvbeta.e (72 aa).

Positions 1–34 (MNNKEFNMEQFKKLAAVVSEDELDEMLDENVTGA) are cleaved as a propeptide — cleaved by FlvT. The segment at residues 36–40 (SSIPC) is a cross-link (lanthionine (Ser-Cys); by FlvM2). A 2,3-didehydroalanine (Ser); by FlvM2 modification is found at serine 37. A 2,3-didehydrobutyrine; by FlvM2 mark is found at threonine 48 and threonine 49. 3 cross-links (beta-methyllanthionine (Thr-Cys); by FlvM2) span residues 55-61 (TTGFDWC), 63-66 (TGAC), and 67-70 (TTSC).

Contains LL-lanthionine and DL-beta-methyllanthionine, when coepressed in E.coli with the flavecin synthetase FlvM2.

It is found in the secreted. Its function is as follows. Lanthionine-containing peptide antibiotic (lantibiotic) that is probably active on Gram-positive bacteria, since its analog [Del1]Flvbeta.e shows antibacterial activity against Gram-positive bacteria. This activity is not synergistically enhanced by [Del2]Flvalpha.a, an analog of Flvalpha.a, which is encoded by the same operon than Flvbeta.e. The bactericidal activity of lantibiotics is based on depolarization of energized bacterial cytoplasmic membranes, initiated by the formation of aqueous transmembrane pores. The protein is Lantibiotic Flvbeta.e of Ruminococcus flavefaciens.